The primary structure comprises 410 residues: Segmentation protein fushi tarazu (410 aa).

3 disordered regions span residues 71 to 93, 138 to 157, and 175 to 221; these read TQTV…KAED, PAVS…QEYV, and SPQS…SAVS. Residues 76–85 are compositionally biased toward pro residues; that stretch reads PVQPTTPPPK. Pro residues predominate over residues 190-199; that stretch reads TPPPTTPTSL. The segment at residues 254–313 is a DNA-binding region (homeobox); that stretch reads SKRTRQTYTRYQTLELEKEFHFNRYITRRRRIDIANALSLSERQIKIWFQNRRMKSKKDR.

Belongs to the Antp homeobox family. Post-translationally, phosphorylated at as many as 16 sites. As to expression, expressed early in development in a striped pattern at the blastoderm stage. Later expressed in a specific subset of neuronal precursor cells, neurons and glia in the developing CNS. Between 5 and 6 hours of development, found in the midline precursor-2 cells in a segmentally repeating pattern. Expression in many other neuronal precursors follows and reaches a second peak of abundance at 9 hours of development. Expressed in the hindgut between 11-15 hours of development.

Its subcellular location is the nucleus. Functionally, may play a role in determining neuronal identity, may be directly involved in specifying identity of individual neurons. Required during embryogenesis for the process of body segmentation. Homeotic protein, required in alternating segment primordia, it specifies the correct number of segments. This is Segmentation protein fushi tarazu (ftz) from Drosophila melanogaster (Fruit fly).